The sequence spans 479 residues: Ribulose bisphosphate carboxylase large chain (479 aa).

The propeptide occupies 1-2; sequence MS. Residues Asn123 and Thr173 each coordinate substrate. The active-site Proton acceptor is Lys175. Position 177 (Lys177) interacts with substrate. Residues Lys201, Asp203, and Glu204 each coordinate Mg(2+). An N6-carboxylysine modification is found at Lys201. Phosphoserine is present on Ser208. His294 serves as the catalytic Proton acceptor. Residues Arg295 and His327 each coordinate substrate. Thr330 carries the post-translational modification Phosphothreonine. Ser379 provides a ligand contact to substrate.

The protein belongs to the RuBisCO large chain family. Type I subfamily. Heterohexadecamer of 8 large chains and 8 small chains; disulfide-linked. The disulfide link is formed within the large subunit homodimers. Mg(2+) serves as cofactor. In terms of processing, the disulfide bond which can form in the large chain dimeric partners within the hexadecamer appears to be associated with oxidative stress and protein turnover.

It localises to the plastid. Its subcellular location is the chloroplast. The catalysed reaction is 2 (2R)-3-phosphoglycerate + 2 H(+) = D-ribulose 1,5-bisphosphate + CO2 + H2O. The enzyme catalyses D-ribulose 1,5-bisphosphate + O2 = 2-phosphoglycolate + (2R)-3-phosphoglycerate + 2 H(+). Functionally, ruBisCO catalyzes two reactions: the carboxylation of D-ribulose 1,5-bisphosphate, the primary event in carbon dioxide fixation, as well as the oxidative fragmentation of the pentose substrate in the photorespiration process. Both reactions occur simultaneously and in competition at the same active site. This is Ribulose bisphosphate carboxylase large chain from Capsella bursa-pastoris (Shepherd's purse).